The chain runs to 141 residues: Large ribosomal subunit protein uL11 (141 aa).

This sequence belongs to the universal ribosomal protein uL11 family. In terms of assembly, part of the ribosomal stalk of the 50S ribosomal subunit. Interacts with L10 and the large rRNA to form the base of the stalk. L10 forms an elongated spine to which L12 dimers bind in a sequential fashion forming a multimeric L10(L12)X complex.

Forms part of the ribosomal stalk which helps the ribosome interact with GTP-bound translation factors. The sequence is that of Large ribosomal subunit protein uL11 from Acidianus ambivalens (Desulfurolobus ambivalens).